The chain runs to 319 residues: Aspartate carbamoyltransferase catalytic subunit (319 aa).

Residues arginine 57 and threonine 58 each contribute to the carbamoyl phosphate site. Lysine 85 serves as a coordination point for L-aspartate. Positions 107, 140, and 143 each coordinate carbamoyl phosphate. The L-aspartate site is built by arginine 173 and arginine 227. 2 residues coordinate carbamoyl phosphate: glycine 268 and proline 269.

This sequence belongs to the aspartate/ornithine carbamoyltransferase superfamily. ATCase family. As to quaternary structure, heterododecamer (2C3:3R2) of six catalytic PyrB chains organized as two trimers (C3), and six regulatory PyrI chains organized as three dimers (R2).

It carries out the reaction carbamoyl phosphate + L-aspartate = N-carbamoyl-L-aspartate + phosphate + H(+). It participates in pyrimidine metabolism; UMP biosynthesis via de novo pathway; (S)-dihydroorotate from bicarbonate: step 2/3. Its function is as follows. Catalyzes the condensation of carbamoyl phosphate and aspartate to form carbamoyl aspartate and inorganic phosphate, the committed step in the de novo pyrimidine nucleotide biosynthesis pathway. In Mycobacterium tuberculosis (strain ATCC 25177 / H37Ra), this protein is Aspartate carbamoyltransferase catalytic subunit.